The sequence spans 107 residues: U1-lycotoxin-Ls1v (107 aa).

Positions Met1–Ser20 are cleaved as a signal peptide. The propeptide occupies Glu21 to Arg41. 4 disulfides stabilise this stretch: Cys44–Cys59, Cys51–Cys68, Cys58–Cys86, and Cys70–Cys84.

The protein belongs to the neurotoxin 19 (CSTX) family. 04 (U1-Lctx) subfamily. In terms of tissue distribution, expressed by the venom gland.

The protein localises to the secreted. This is U1-lycotoxin-Ls1v from Lycosa singoriensis (Wolf spider).